The chain runs to 166 residues: NAD(P)H-quinone oxidoreductase subunit I, chloroplastic (166 aa).

4Fe-4S ferredoxin-type domains are found at residues Gly55 to Lys84 and Leu95 to Glu124. [4Fe-4S] cluster-binding residues include Cys64, Cys67, Cys70, Cys74, Cys104, Cys107, Cys110, and Cys114.

Belongs to the complex I 23 kDa subunit family. In terms of assembly, NDH is composed of at least 16 different subunits, 5 of which are encoded in the nucleus. Requires [4Fe-4S] cluster as cofactor.

The protein localises to the plastid. It localises to the chloroplast thylakoid membrane. It carries out the reaction a plastoquinone + NADH + (n+1) H(+)(in) = a plastoquinol + NAD(+) + n H(+)(out). The catalysed reaction is a plastoquinone + NADPH + (n+1) H(+)(in) = a plastoquinol + NADP(+) + n H(+)(out). NDH shuttles electrons from NAD(P)H:plastoquinone, via FMN and iron-sulfur (Fe-S) centers, to quinones in the photosynthetic chain and possibly in a chloroplast respiratory chain. The immediate electron acceptor for the enzyme in this species is believed to be plastoquinone. Couples the redox reaction to proton translocation, and thus conserves the redox energy in a proton gradient. This Guardiola tulocarpus protein is NAD(P)H-quinone oxidoreductase subunit I, chloroplastic.